The primary structure comprises 309 residues: tRNA dimethylallyltransferase (309 aa).

11–18 (GPTASGKS) lines the ATP pocket. 13 to 18 (TASGKS) provides a ligand contact to substrate. Interaction with substrate tRNA regions lie at residues 36-39 (DSMQ) and 160-164 (QRLLR).

This sequence belongs to the IPP transferase family. In terms of assembly, monomer. Requires Mg(2+) as cofactor.

The enzyme catalyses adenosine(37) in tRNA + dimethylallyl diphosphate = N(6)-dimethylallyladenosine(37) in tRNA + diphosphate. In terms of biological role, catalyzes the transfer of a dimethylallyl group onto the adenine at position 37 in tRNAs that read codons beginning with uridine, leading to the formation of N6-(dimethylallyl)adenosine (i(6)A). The protein is tRNA dimethylallyltransferase of Caulobacter sp. (strain K31).